A 469-amino-acid polypeptide reads, in one-letter code: Citrate synthase, mitochondrial (469 aa).

A mitochondrion-targeting transit peptide spans 1 to 30; that stretch reads MSFLTVSRLAPKLLNSKNATYFLVAARNAS. Residues His-304 and His-350 contribute to the active site. Arg-359 serves as a coordination point for oxaloacetate. Asp-405 is an active-site residue. Oxaloacetate contacts are provided by Arg-431 and Arg-451.

It belongs to the citrate synthase family. In terms of assembly, homodimer.

The protein resides in the mitochondrion matrix. The catalysed reaction is oxaloacetate + acetyl-CoA + H2O = citrate + CoA + H(+). Its pathway is carbohydrate metabolism; tricarboxylic acid cycle; isocitrate from oxaloacetate: step 1/2. Its function is as follows. Key enzyme of the Krebs tricarboxylic acid cycle which catalyzes the synthesis of citrate from acetyl coenzyme A and oxaloacetate. This chain is Citrate synthase, mitochondrial (cs), found in Xiphias gladius (Swordfish).